A 450-amino-acid polypeptide reads, in one-letter code: Probable ATP-dependent RNA helicase MG425 homolog (450 aa).

The Q motif motif lies at 3 to 31 (STFNELGVSPALIATLKDNNINQPTTIQQ). The Helicase ATP-binding domain occupies 34-206 (IPQFLQHQNL…KQITKNGIFL (173 aa)). 47 to 54 (SPTGTGKT) is an ATP binding site. A DEVD box motif is present at residues 154-157 (DEVD). Residues 234–384 (RKKQALYSLV…PLRPMRLRLI (151 aa)) enclose the Helicase C-terminal domain. Positions 429-450 (MRQPERDMQKNKLHDSDWQSNM) are disordered. Basic and acidic residues predominate over residues 430-450 (RQPERDMQKNKLHDSDWQSNM).

This sequence belongs to the DEAD box helicase family.

The catalysed reaction is ATP + H2O = ADP + phosphate + H(+). The chain is Probable ATP-dependent RNA helicase MG425 homolog from Mycoplasma pneumoniae (strain ATCC 29342 / M129 / Subtype 1) (Mycoplasmoides pneumoniae).